We begin with the raw amino-acid sequence, 424 residues long: Gamma-glutamyl phosphate reductase (424 aa).

Belongs to the gamma-glutamyl phosphate reductase family.

It is found in the cytoplasm. The enzyme catalyses L-glutamate 5-semialdehyde + phosphate + NADP(+) = L-glutamyl 5-phosphate + NADPH + H(+). Its pathway is amino-acid biosynthesis; L-proline biosynthesis; L-glutamate 5-semialdehyde from L-glutamate: step 2/2. In terms of biological role, catalyzes the NADPH-dependent reduction of L-glutamate 5-phosphate into L-glutamate 5-semialdehyde and phosphate. The product spontaneously undergoes cyclization to form 1-pyrroline-5-carboxylate. This Shewanella sediminis (strain HAW-EB3) protein is Gamma-glutamyl phosphate reductase.